A 506-amino-acid polypeptide reads, in one-letter code: Maturase K (506 aa).

Belongs to the intron maturase 2 family. MatK subfamily.

It localises to the plastid. The protein resides in the chloroplast. Functionally, usually encoded in the trnK tRNA gene intron. Probably assists in splicing its own and other chloroplast group II introns. The sequence is that of Maturase K from Prunus dulcis (Almond).